We begin with the raw amino-acid sequence, 293 residues long: Phosphoribosylaminoimidazole-succinocarboxamide synthase (293 aa).

Belongs to the SAICAR synthetase family.

The catalysed reaction is 5-amino-1-(5-phospho-D-ribosyl)imidazole-4-carboxylate + L-aspartate + ATP = (2S)-2-[5-amino-1-(5-phospho-beta-D-ribosyl)imidazole-4-carboxamido]succinate + ADP + phosphate + 2 H(+). It functions in the pathway purine metabolism; IMP biosynthesis via de novo pathway; 5-amino-1-(5-phospho-D-ribosyl)imidazole-4-carboxamide from 5-amino-1-(5-phospho-D-ribosyl)imidazole-4-carboxylate: step 1/2. In Bordetella petrii (strain ATCC BAA-461 / DSM 12804 / CCUG 43448), this protein is Phosphoribosylaminoimidazole-succinocarboxamide synthase.